The following is a 155-amino-acid chain: Small ribosomal subunit protein uS7 (155 aa).

Belongs to the universal ribosomal protein uS7 family. In terms of assembly, part of the 30S ribosomal subunit. Contacts proteins S9 and S11.

In terms of biological role, one of the primary rRNA binding proteins, it binds directly to 16S rRNA where it nucleates assembly of the head domain of the 30S subunit. Is located at the subunit interface close to the decoding center, probably blocks exit of the E-site tRNA. In Chloroherpeton thalassium (strain ATCC 35110 / GB-78), this protein is Small ribosomal subunit protein uS7.